A 549-amino-acid chain; its full sequence is CTP synthase (549 aa).

The amidoligase domain stretch occupies residues 1–266; sequence MSAKYIFVTG…DKLALRYLHL (266 aa). S14 provides a ligand contact to CTP. UTP is bound at residue S14. ATP is bound by residues 15–20 and D72; that span reads SLGKGL. Residues D72 and E140 each coordinate Mg(2+). CTP-binding positions include 147–149, 187–192, and K223; these read DIE and KTKPTQ. UTP contacts are provided by residues 187–192 and K223; that span reads KTKPTQ. 239 to 241 contacts ATP; that stretch reads KDV. The region spanning 291-533 is the Glutamine amidotransferase type-1 domain; the sequence is SIGIVGKYVE…VKAAYQNHKP (243 aa). Residue G353 participates in L-glutamine binding. The active-site Nucleophile; for glutamine hydrolysis is the C380. Residues 381–384, E404, and R461 contribute to the L-glutamine site; that span reads LGMQ. Catalysis depends on residues H506 and E508.

It belongs to the CTP synthase family. In terms of assembly, homotetramer.

It carries out the reaction UTP + L-glutamine + ATP + H2O = CTP + L-glutamate + ADP + phosphate + 2 H(+). The enzyme catalyses L-glutamine + H2O = L-glutamate + NH4(+). It catalyses the reaction UTP + NH4(+) + ATP = CTP + ADP + phosphate + 2 H(+). It participates in pyrimidine metabolism; CTP biosynthesis via de novo pathway; CTP from UDP: step 2/2. Its activity is regulated as follows. Allosterically activated by GTP, when glutamine is the substrate; GTP has no effect on the reaction when ammonia is the substrate. The allosteric effector GTP functions by stabilizing the protein conformation that binds the tetrahedral intermediate(s) formed during glutamine hydrolysis. Inhibited by the product CTP, via allosteric rather than competitive inhibition. Catalyzes the ATP-dependent amination of UTP to CTP with either L-glutamine or ammonia as the source of nitrogen. Regulates intracellular CTP levels through interactions with the four ribonucleotide triphosphates. This is CTP synthase from Acidobacterium capsulatum (strain ATCC 51196 / DSM 11244 / BCRC 80197 / JCM 7670 / NBRC 15755 / NCIMB 13165 / 161).